The following is a 517-amino-acid chain: Ribonuclease Y (517 aa).

A helical transmembrane segment spans residues 3 to 23 (AILYVIVAVIALILGGAAGVA). One can recognise a KH domain in the interval 207 to 292 (TVTVVSLPND…EMVEKAQKEV (86 aa)). An HD domain is found at 333–426 (VLKHSIEVAH…VAAADAISAA (94 aa)).

This sequence belongs to the RNase Y family.

Its subcellular location is the cell membrane. Functionally, endoribonuclease that initiates mRNA decay. The chain is Ribonuclease Y from Symbiobacterium thermophilum (strain DSM 24528 / JCM 14929 / IAM 14863 / T).